Consider the following 159-residue polypeptide: Anaerobic nitrite reductase HB2 (159 aa).

The 151-residue stretch at glycine 2 to lysine 152 folds into the Globin domain. The short motif at glutamate 35–glycine 39 is the Homodimerization element. Residues serine 45, lysine 59, histidine 63, and histidine 98 each coordinate heme b. Residues aspartate 105–arginine 117 carry the Homodimerization motif.

Belongs to the plant globin family. In terms of assembly, homodimer. Heme b is required as a cofactor.

The protein resides in the cytoplasm. It is found in the nucleus. It carries out the reaction Fe(III)-heme b-[protein] + nitric oxide + H2O = Fe(II)-heme b-[protein] + nitrite + 2 H(+). In terms of biological role, phytoglobin that reduces nitrite to nitric oxide (NO) under anoxic conditions (e.g. during flooding or in waterlogged soil). May not function as an oxygen storage or transport protein. Has an unusually high affinity for O(2) through an hexacoordinate heme iron because of a very low dissociation constant. In Gossypium hirsutum (Upland cotton), this protein is Anaerobic nitrite reductase HB2.